The chain runs to 1901 residues: MATFRNNHMKTKASVRKSFSEDVFQSVKSLLQSQKELCSVTAEDCLQQDEHANLTEVTFLGFNEETDAAHIQDLAAVSLELPDILNSLHFCSLNENEIICMKNINKPLDISSDPLNQSHPSGMLCVMRVSPTSPRLRIDFIFSLLSKYATGIRYTLDTFLHQKHQLETTDEDDDDTNQSVSSIEDDFVTAFEHLEEEETSKPYNDGMNITVLRSQCDAASQTVTGHHLETHDLKILISSGQQKSLAKPSTSSVNVLGHKELPSVKTSVTTSISEPWTQRSFYRSSNASDKDSDLQKTFFSSSPAYSSESECSSPSPVIFLDEEGYQKSLKAKLELPKIPVMKDDIEDSDSEVSEFFDSFDQFDELEQTLETCLFNKDPVIGKSSQRKGHKHGKSCMNPQKFKFDRPALPANVRKPTPRKPESPYGNLCDAPDSPRPVKASREDSGLFSPIRSSAFSPLGGCTPAECFCQTDIGGDRIHENHDSVYYTYEDYAKSISCEVLGSVLRTHHTNTLSNINSIKHGENKTVTFKHGNLDQKNKSKNKSLMIKDSIQKFAADLVEKSFGSAFKDLQKGVSSCTNALYHLAIKLTSSVLQMAFDELRRQRAFSLKERAISGLANFLVSEALSNALKDLQYVKKQIFTNTVARFAADLAEELVFEGIMEVCQFSYPQTPASPQCGSFDFEDKVVKLYAKDLSESVIQEAFIELSQVDVTFTTKAAVSVSTDNIKYVSAESVVPSTQAVTFSPSFHNQAIMVTKPVQEYKKEYTVQQALFCTSGIVTSIPVPLAGSALLPYHISSTACQAKAHLSSDDSNSNGDSAQVHIATKNREEKAACLRNICLPSEHNPGNQNDFKPTNDDIEMQSSSKLPNDPAIISNFSAAVVHTIVNETLESMTSLEVTKMVDERTDYLTKSLKEKTPPFSHCDQAVLQCSEASSNKDMFADRLSKSIIKHSIDKSKSVIPNIDKNAVYKESLPVSGEESQLTPEKSPKFPDSQNQLTHCSLSAAKDCVPECKVSMVHGSSLETLPSCPAVTGQKSDLKESAKDQPLKKHNLNSTSLEALSFGQENPFPHSHTFSSTALTCVDGLHVEDKQKVRDRNVIPDTPPSTPLVPSRASSEWDIKKLTKKLKGELAKEFAPATPPSTPHNSSVGSLSENEQNTIEKEEFMLKLMRSLSEEVESSESGELPEVDVKSEHSGKKVQFAEALATHILSLATEMAASHLDNKIIQEPKVKNPCLNVQSQRSVSPTFLNPSDENLKTLCNFAGDLAAEVITEAEKIAKVRNCMLFKQKKNSCYADGDEDYKVEEKLDIEAVVHPREVDPFILSLPPSSCMSGLMYKYPSCESVTDEYAGHLIQILKQEGGNSELIMDQYANRLAYRSVKSGLQEAAKTTKVQCNSRMFPVPSSQVKTNKELLMFSNKEHHQEADKKRQSKRNEGYFCKNQTCERTLDPYRNEVSQLYSFSTSLVHSITKDAKEELTASLVGLPKSLTDSCLFEKSGYEEDNECHVTPELPKSLQPSSQNHRFYHSTGSLNGYGCGDNVVQAVEQYAKKVVDDTLELTLGSTVFRVSETTKSADRVTYAEKLSPLTGQACRYCDLKELHNCTGNSSQHFFRQGSLASSKPASNPKFSSRYQKSRIFHLSVPQIHVNLDKKAVLAEKIVAEAIEKAERELSSTSLAADSGIGQEGASFAESLATETMTAAVTNVGHAVSSSKEIEDFQSTESVSSQQMNLSIGDDSTGSWSNLSFEDEHQDESSSFHHLSESNGNSSSWSSLGLEGDLYEDNLSFPTSDSDGPDDKDEEHEDEVEGLGQDGKTLLITNIDMEPCTVDPQLRIILQWLIASEAEVAELYFHDSANKEFMLLSKQLQEKGWKVGDLLQAVLQYYEVMEKASSEERCKSLFDWLLENA.

5 positions are modified to phosphoserine: Ser18, Ser422, Ser433, Ser444, and Ser448. Residues 407–443 (ALPANVRKPTPRKPESPYGNLCDAPDSPRPVKASRED) are disordered. 2 disordered regions span residues 843–864 (NPGN…SSSK) and 971–993 (LPVS…DSQN). Phosphothreonine occurs at positions 981 and 1100. Residues 1131–1153 (EFAPATPPSTPHNSSVGSLSENE) are disordered. Over residues 1141 to 1153 (PHNSSVGSLSENE) the composition is skewed to polar residues. Phosphoserine is present on residues Ser1171, Ser1176, Ser1177, Ser1242, and Ser1337. The residue at position 1485 (Thr1485) is a Phosphothreonine. Phosphoserine is present on Ser1580. The PKA-RII subunit binding domain stretch occupies residues 1650-1663 (LAEKIVAEAIEKAE). Positions 1708–1805 (KEIEDFQSTE…HEDEVEGLGQ (98 aa)) are disordered. The span at 1713–1740 (FQSTESVSSQQMNLSIGDDSTGSWSNLS) shows a compositional bias: polar residues. Positions 1747–1756 (DESSSFHHLS) are enriched in basic and acidic residues. Residues 1757–1772 (ESNGNSSSWSSLGLEG) show a composition bias toward low complexity. Positions 1787 to 1801 (DGPDDKDEEHEDEVE) are enriched in acidic residues.

This sequence belongs to the AKAP110 family. Expressed in heart, brain, lung, liver, kidney, testis and ovary. Weakly expressed in skeletal muscle, pancreas and spleen.

It localises to the cytoplasm. The protein resides in the cytoskeleton. It is found in the microtubule organizing center. The protein localises to the centrosome. Binds to type II regulatory subunits of protein kinase A and anchors/targets them. This is A-kinase anchor protein 11 (AKAP11) from Homo sapiens (Human).